The following is a 330-amino-acid chain: G-protein coupled bile acid receptor 1 (330 aa).

The Extracellular portion of the chain corresponds to 1-19 (MTPNSTGEVPGPIPRGALE). An N-linked (GlcNAc...) asparagine glycan is attached at N4. Residues 20 to 40 (LSLALASLIIAANLLLALGIA) traverse the membrane as a helical segment. Over 41 to 50 (CDRRLRSPPA) the chain is Cytoplasmic. Residues 51–71 (GCFFLSLLLAGLLTGLALPTL) form a helical membrane-spanning segment. The Extracellular portion of the chain corresponds to 72 to 85 (PGLWRQSHRGYWSC). Cysteines 85 and 155 form a disulfide. The chain crosses the membrane as a helical span at residues 86-106 (LLVYLAPNFSFLSLLANLLLV). Residues 107 to 125 (HGERYVAVLRPLQPPGSIR) are Cytoplasmic-facing. Residues 126 to 146 (LALLLTWTGPLLFASLPALGW) traverse the membrane as a helical segment. The Extracellular segment spans residues 147–169 (NHWGPEANCSSQTIFPAPYLYLE). N-linked (GlcNAc...) asparagine glycosylation occurs at N154. A helical membrane pass occupies residues 170-190 (VYGLLLPAVGAAALLSAHVLL). Topologically, residues 191–230 (AAHRQLQDIRRLERAVCRDAPSALARALTWRQARAQAGAT) are cytoplasmic. The chain crosses the membrane as a helical span at residues 231–251 (LLFGLCWGPYVATLFLSVLAY). Residues 252–261 (EQRPPLGPGT) are Extracellular-facing. The helical transmembrane segment at 262–282 (LLSLLSLGSASAAAVPVAMGL) threads the bilayer. The Cytoplasmic portion of the chain corresponds to 283 to 330 (GDHRYTAPWRAAARRWLRGLRGRGSQASPGPSTAYHTSSQSSVDVDLN). The tract at residues 304–330 (GRGSQASPGPSTAYHTSSQSSVDVDLN) is disordered. A compositionally biased stretch (polar residues) spans 307–330 (SQASPGPSTAYHTSSQSSVDVDLN).

Belongs to the G-protein coupled receptor 1 family. In terms of tissue distribution, expressed at high level in spleen. Expressed at lower level in thymus, heart, lung, liver, kidney, ileum, blood and adherent alveolar macrophage cells.

It localises to the cell membrane. In terms of biological role, receptor for bile acid. Bile-acid binding induces its internalization, activation of extracellular signal-regulated kinase and intracellular cAMP production. May be involved in the suppression of macrophage functions by bile acids. Involved in bile acid promoted GLP1R secretion. This chain is G-protein coupled bile acid receptor 1 (GPBAR1), found in Oryctolagus cuniculus (Rabbit).